A 64-amino-acid chain; its full sequence is Large ribosomal subunit protein bL35 (64 aa).

It belongs to the bacterial ribosomal protein bL35 family.

This Streptomyces avermitilis (strain ATCC 31267 / DSM 46492 / JCM 5070 / NBRC 14893 / NCIMB 12804 / NRRL 8165 / MA-4680) protein is Large ribosomal subunit protein bL35.